The chain runs to 372 residues: MQFVHMADNHLGYRQYNLDERENDIYESFLECIDKIIEIRPDFVIHSGDLFESPQPPVNAIRCAMEGLLKLKEKNIPIYLIHGNHDIPKSQQKGKPFGLLKKILGNSLLTFGKNKSHVFNNEVFIGGIEYVSQNKIPKTYEDLEKINSDSKNYKKKILLFHQSVNPFIPQSFEMQVTDFPDDFNYIAGGHIHQRALKPINDGNSVFSYAGSTDIMSVSEVKDYKKNGKGFYLGDLSGDFDINSIQKIDVECRNFLIDKKIKNENDYKKTVEELQNLQSEKKKPILYCDIVENLFNSFNDEIANLTLYKRISRIDENLEESLIINESSIEEIFQEYIKNKEMDVNFVYGLYKKLLENDEDSLLYVNDYFKGNY.

Asp-8, His-10, Asp-49, and Asn-84 together coordinate Mn(2+). Residue His-85 is the Proton donor of the active site. Mn(2+)-binding residues include His-161, His-190, and His-192.

This sequence belongs to the MRE11/RAD32 family. Homodimer. Forms a heterotetramer composed of two Mre11 subunits and two Rad50 subunits. It depends on Mn(2+) as a cofactor.

Nuclease activity is regulated by Rad50. Functionally, part of the Rad50/Mre11 complex, which is involved in the early steps of DNA double-strand break (DSB) repair. The complex may facilitate opening of the processed DNA ends to aid in the recruitment of HerA and NurA. Mre11 binds to DSB ends and has both double-stranded 3'-5' exonuclease activity and single-stranded endonuclease activity. This chain is DNA double-strand break repair protein Mre11, found in Methanococcus maripaludis (strain DSM 14266 / JCM 13030 / NBRC 101832 / S2 / LL).